The following is a 289-amino-acid chain: Formamidopyrimidine-DNA glycosylase (289 aa).

Catalysis depends on P2, which acts as the Schiff-base intermediate with DNA. Catalysis depends on E3, which acts as the Proton donor. The active-site Proton donor; for beta-elimination activity is K61. DNA contacts are provided by H97, R119, and K168. An FPG-type zinc finger spans residues 254-288 (NAYGRAGKPCPRCGEPIVRVQWTNRSSHFCPQCQS). Residue R278 is the Proton donor; for delta-elimination activity of the active site.

The protein belongs to the FPG family. As to quaternary structure, monomer. It depends on Zn(2+) as a cofactor.

It catalyses the reaction Hydrolysis of DNA containing ring-opened 7-methylguanine residues, releasing 2,6-diamino-4-hydroxy-5-(N-methyl)formamidopyrimidine.. It carries out the reaction 2'-deoxyribonucleotide-(2'-deoxyribose 5'-phosphate)-2'-deoxyribonucleotide-DNA = a 3'-end 2'-deoxyribonucleotide-(2,3-dehydro-2,3-deoxyribose 5'-phosphate)-DNA + a 5'-end 5'-phospho-2'-deoxyribonucleoside-DNA + H(+). Involved in base excision repair of DNA damaged by oxidation or by mutagenic agents. Acts as a DNA glycosylase that recognizes and removes damaged bases. Has a preference for oxidized purines, such as 7,8-dihydro-8-oxoguanine (8-oxoG). Has AP (apurinic/apyrimidinic) lyase activity and introduces nicks in the DNA strand. Cleaves the DNA backbone by beta-delta elimination to generate a single-strand break at the site of the removed base with both 3'- and 5'-phosphates. The chain is Formamidopyrimidine-DNA glycosylase from Corynebacterium urealyticum (strain ATCC 43042 / DSM 7109).